Here is a 403-residue protein sequence, read N- to C-terminus: Creatinase (403 aa).

Residue H232 is part of the active site.

Belongs to the peptidase M24 family. Creatinase subfamily. As to quaternary structure, homodimer.

The catalysed reaction is creatine + H2O = sarcosine + urea. The protein is Creatinase of Pseudomonas putida (Arthrobacter siderocapsulatus).